The following is a 344-amino-acid chain: Succinylglutamate desuccinylase (344 aa).

The Zn(2+) site is built by H63, E66, and H160. Residue E224 is part of the active site.

The protein belongs to the AspA/AstE family. Succinylglutamate desuccinylase subfamily. Zn(2+) is required as a cofactor.

It carries out the reaction N-succinyl-L-glutamate + H2O = L-glutamate + succinate. The protein operates within amino-acid degradation; L-arginine degradation via AST pathway; L-glutamate and succinate from L-arginine: step 5/5. Functionally, transforms N(2)-succinylglutamate into succinate and glutamate. This chain is Succinylglutamate desuccinylase, found in Shewanella putrefaciens (strain CN-32 / ATCC BAA-453).